The following is a 331-amino-acid chain: Probable inactive O-methyltransferase 11 (331 aa).

S-adenosyl-L-methionine is bound by residues Gly-179, Asp-202, 224–226 (GDF), Asp-225, Phe-226, and Lys-239.

The protein belongs to the class I-like SAM-binding methyltransferase superfamily. Cation-independent O-methyltransferase family. COMT subfamily.

This is Probable inactive O-methyltransferase 11 (omt11) from Dictyostelium discoideum (Social amoeba).